Consider the following 129-residue polypeptide: Large ribosomal subunit protein uL22 (129 aa).

It belongs to the universal ribosomal protein uL22 family. As to quaternary structure, part of the 50S ribosomal subunit.

Functionally, this protein binds specifically to 23S rRNA; its binding is stimulated by other ribosomal proteins, e.g. L4, L17, and L20. It is important during the early stages of 50S assembly. It makes multiple contacts with different domains of the 23S rRNA in the assembled 50S subunit and ribosome. The globular domain of the protein is located near the polypeptide exit tunnel on the outside of the subunit, while an extended beta-hairpin is found that lines the wall of the exit tunnel in the center of the 70S ribosome. This chain is Large ribosomal subunit protein uL22, found in Aster yellows witches'-broom phytoplasma (strain AYWB).